A 218-amino-acid chain; its full sequence is Ribose-5-phosphate isomerase A (218 aa).

Residues 28 to 31 (SGST), 81 to 84 (DGAD), and 94 to 97 (KGGG) each bind substrate. Glu-103 functions as the Proton acceptor in the catalytic mechanism. Position 121 (Lys-121) interacts with substrate.

Belongs to the ribose 5-phosphate isomerase family. Homodimer.

The enzyme catalyses aldehydo-D-ribose 5-phosphate = D-ribulose 5-phosphate. The protein operates within carbohydrate degradation; pentose phosphate pathway; D-ribose 5-phosphate from D-ribulose 5-phosphate (non-oxidative stage): step 1/1. Catalyzes the reversible conversion of ribose-5-phosphate to ribulose 5-phosphate. The protein is Ribose-5-phosphate isomerase A of Dichelobacter nodosus (strain VCS1703A).